Here is a 117-residue protein sequence, read N- to C-terminus: Large ribosomal subunit protein uL18 (117 aa).

Belongs to the universal ribosomal protein uL18 family. As to quaternary structure, part of the 50S ribosomal subunit; part of the 5S rRNA/L5/L18/L25 subcomplex. Contacts the 5S and 23S rRNAs.

In terms of biological role, this is one of the proteins that bind and probably mediate the attachment of the 5S RNA into the large ribosomal subunit, where it forms part of the central protuberance. In Vibrio campbellii (strain ATCC BAA-1116), this protein is Large ribosomal subunit protein uL18.